The chain runs to 550 residues: MTTMTTMTTEQLGMNNSVNDKLDVLLIGAGFTGLYQLYHLRKLGYKVHLVDAGADIGGIWHWNCYPGARVDTHCQIYQYSIPELWQEFNWKELFPNWAQMREYFHFADKKLDLSKDISFNTRVQSAVFDEGTREWTVRSIGHQPIQARFVIANLGFGASPSTPNVDGIETFKGQWYHTALWPQEGVNMAGKRVAIIGTGSSGVQVAQEAALDAKQVTVYQRTPNLALPMHQKQLSAEDNLRMKPELPAAFERRGKCFAGFDFDFIAKNATELSAAERTEILEELWNAGGFRYWLANFQDYLFDDKANDYVYEFWRDKVRARIKDPKVAEKLAPMKKPHPYGAKRPSLEQWYYEIFNQNNVTLVDVNETPVLRITEKGIVTAEGEAEFDLIVFATGFDAVTGGLTSIDFRNNQGQSFKDVWSDGIRTQLGVATAGFPNLLFGYGPQSPAGFCNGPSSAEYQGDLLIQLMNYLRDNNISRIEAQSEAQEEWSKLIADFWDSSLFPRAKSWYQGSNIPGKKVESLNFPLGLPTYISKFNESAEKGYAGFSLAS.

FAD is bound by residues Phe-31–Thr-32, Asp-51, Trp-60, Asp-71, Tyr-77, and Val-123.

This sequence belongs to the FAD-binding monooxygenase family. As to quaternary structure, homotetramer. The cofactor is FAD.

It carries out the reaction cyclopentanone + NADPH + O2 + H(+) = 5-valerolactone + NADP(+) + H2O. Its pathway is alcohol metabolism; cyclopentanol degradation; 5-valerolactone from cyclopentanol: step 2/2. Functionally, catalyzes a Baeyer-Villiger oxidation reaction, i.e. the insertion of an oxygen atom into a carbon-carbon bond adjacent to a carbonyl, which converts ketones to esters or lactones using NADPH as an electron donor. Converts cyclopentanone to 5-valerolactone, a step in the degradation pathway of cyclopentanol. Besides cycloalkanones, can also act on methylated and other alkylated cycloalkanones, and on methylated cycloalkenones, with high enantioselectivity in some cases. Cannot use NADH instead of NADPH. The chain is Cyclopentanone 1,2-monooxygenase (cpnB) from Comamonas sp. (strain NCIMB 9872).